A 365-amino-acid chain; its full sequence is Baculoviral IAP repeat-containing protein 7 (365 aa).

BIR repeat units lie at residues 7 to 73 and 115 to 180; these read RQRS…PFLQ and RLGS…DFLL. C149, C152, H169, and C176 together coordinate Zn(2+). Residues 186 to 234 are self-inhibits the anti-apoptotic function; sequence AFIRSVQESFFSSPETSPESVGSYEGSPVSSPGSPPVCPFLSTSVAQGA. S198 carries the post-translational modification Phosphoserine. At S202 the chain carries Phosphoserine; by MAPK1. S212 carries the phosphoserine modification. Phosphoserine; by MAPK1 is present on residues S216 and S219. The interval 278–306 is disordered; it reads TESVSVPRAPTQRERPEPPKEPAPPLSTE. Residues 288 to 297 show a composition bias toward basic and acidic residues; that stretch reads TQRERPEPPK. The RING-type zinc-finger motif lies at 318–353; that stretch reads CKVCMDNDVSMVFVPCGHLVVCTECAPNLRHCPICR.

Belongs to the IAP family. In terms of processing, auto-ubiquitinated, and degraded in a 2-step mechanism; a caspase-independent first step and a caspase-dependent second step. Post-translationally, phosphorylated via MAPK-dependent and CDK-dependent pathways during oocyte maturation. Phosphorylation does not appear to affect caspase inhibition or autoubiquitination activity.

It localises to the cytoplasm. The enzyme catalyses S-ubiquitinyl-[E2 ubiquitin-conjugating enzyme]-L-cysteine + [acceptor protein]-L-lysine = [E2 ubiquitin-conjugating enzyme]-L-cysteine + N(6)-ubiquitinyl-[acceptor protein]-L-lysine.. Weak apoptotic suppressor. Has E3 ubiquitin-protein ligase activity. Weak inhibitor of caspase activity. The chain is Baculoviral IAP repeat-containing protein 7 (birc7) from Xenopus tropicalis (Western clawed frog).